A 416-amino-acid chain; its full sequence is Chorismate synthase (416 aa).

Residues arginine 40 and arginine 46 each contribute to the NADP(+) site. FMN-binding positions include 135-137, 256-257, glycine 300, 315-319, and arginine 341; these read RAS, QA, and KPIAT.

The protein belongs to the chorismate synthase family. In terms of assembly, homotetramer. The cofactor is FMNH2.

It catalyses the reaction 5-O-(1-carboxyvinyl)-3-phosphoshikimate = chorismate + phosphate. The protein operates within metabolic intermediate biosynthesis; chorismate biosynthesis; chorismate from D-erythrose 4-phosphate and phosphoenolpyruvate: step 7/7. Catalyzes the anti-1,4-elimination of the C-3 phosphate and the C-6 proR hydrogen from 5-enolpyruvylshikimate-3-phosphate (EPSP) to yield chorismate, which is the branch point compound that serves as the starting substrate for the three terminal pathways of aromatic amino acid biosynthesis. This reaction introduces a second double bond into the aromatic ring system. This Kocuria rhizophila (strain ATCC 9341 / DSM 348 / NBRC 103217 / DC2201) protein is Chorismate synthase.